A 92-amino-acid polypeptide reads, in one-letter code: DNA-binding protein HU (92 aa).

It belongs to the bacterial histone-like protein family. As to quaternary structure, homodimer.

Functionally, histone-like DNA-binding protein which is capable of wrapping DNA to stabilize it, and thus to prevent its denaturation under extreme environmental conditions. This is DNA-binding protein HU (hup) from Buchnera aphidicola subsp. Baizongia pistaciae (strain Bp).